The chain runs to 294 residues: Oligopeptide transport system permease protein OppC (294 aa).

The next 6 helical transmembrane spans lie at 27 to 47, 94 to 114, 127 to 147, 151 to 171, 202 to 224, and 260 to 280; these read MISTIFLVAVFLIVYIYSMFL, IAFAVTLITLVVGNILGVITG, FTDFVMILPSMMIIIVFVTII, NSWSLIGIISIFSWIGTTRLI, IWPNLSTLVIAEATLVFAGNIGL, and WTWVPATVVILIVVLAIIFIG. The ABC transmembrane type-1 domain occupies 88-280; it reads ARNSFNIAFA…IVVLAIIFIG (193 aa).

This sequence belongs to the binding-protein-dependent transport system permease family. OppBC subfamily. The complex is composed of two ATP-binding proteins (OppD and OppF), two transmembrane proteins (OppB and OppC) and a solute-binding protein (OppA).

The protein resides in the cell membrane. Part of the ABC transporter complex OppABCDF involved in the uptake of oligopeptides. Probably responsible for the translocation of the substrate across the membrane. This Lactococcus lactis subsp. cremoris (strain SK11) protein is Oligopeptide transport system permease protein OppC.